The sequence spans 44 residues: Thymosin beta-10 (44 aa).

Basic and acidic residues-rich tracts occupy residues Met1–Glu25 and Glu33–Ser44. The segment at Met1–Ser44 is disordered. Ala2 carries the N-acetylalanine modification. Lys4 bears the N6-acetyllysine mark. Ser12 carries the phosphoserine modification. Lys15 carries the N6-acetyllysine modification. A phosphothreonine mark is found at Thr21, Thr23, and Thr34. N6-acetyllysine is present on Lys39. Phosphoserine is present on Ser41.

Belongs to the thymosin beta family.

Its subcellular location is the cytoplasm. The protein resides in the cytoskeleton. Plays an important role in the organization of the cytoskeleton. Binds to and sequesters actin monomers (G actin) and therefore inhibits actin polymerization. The chain is Thymosin beta-10 (Tmsb10) from Rattus norvegicus (Rat).